The primary structure comprises 368 residues: Putative potassium channel KAT5 (368 aa).

The next 3 membrane-spanning stretches (helical) occupy residues 33–53, 97–117, and 132–152; these read WWHMFLIMLVLYSAWASPFEL, LLNLLRLWRLRCASKLFARVE, and LLCVTLFALHFAACIYLWMVF. The segment at residues 180 to 199 is an intramembrane region (pore-forming); it reads CAVYWSITTLATVGYGDLHA. Residues 206 to 226 traverse the membrane as a helical segment; the sequence is LFSIAFMLFNMGLTSYIIGNI. Residue 225–344 participates in a nucleoside 3',5'-cyclic phosphate binding; the sequence is NITNLVVRET…CIVFSNFILV (120 aa).

This sequence belongs to the potassium channel family. Plant (TC 1.A.1.4) subfamily.

It localises to the membrane. Putative inward-rectifying potassium channel. The chain is Putative potassium channel KAT5 from Oryza sativa subsp. japonica (Rice).